A 381-amino-acid polypeptide reads, in one-letter code: S-adenosylmethionine synthase (381 aa).

Position 15 (H15) interacts with ATP. D17 provides a ligand contact to Mg(2+). E43 contributes to the K(+) binding site. Residues E56 and Q99 each contribute to the L-methionine site. Residues 99–109 (QSPDINQGVDR) form a flexible loop region. Residues 164 to 166 (DAK), 230 to 231 (RF), D239, 245 to 246 (RK), A262, and K266 each bind ATP. D239 contacts L-methionine. K270 contacts L-methionine.

It belongs to the AdoMet synthase family. In terms of assembly, homotetramer; dimer of dimers. Mg(2+) serves as cofactor. Requires K(+) as cofactor.

The protein resides in the cytoplasm. The catalysed reaction is L-methionine + ATP + H2O = S-adenosyl-L-methionine + phosphate + diphosphate. Its pathway is amino-acid biosynthesis; S-adenosyl-L-methionine biosynthesis; S-adenosyl-L-methionine from L-methionine: step 1/1. Functionally, catalyzes the formation of S-adenosylmethionine (AdoMet) from methionine and ATP. The overall synthetic reaction is composed of two sequential steps, AdoMet formation and the subsequent tripolyphosphate hydrolysis which occurs prior to release of AdoMet from the enzyme. This Alteromonas mediterranea (strain DSM 17117 / CIP 110805 / LMG 28347 / Deep ecotype) protein is S-adenosylmethionine synthase.